The primary structure comprises 376 residues: Chaperone protein DnaJ (376 aa).

Residues D4 to G68 form the J domain. A disordered region spans residues G102–D121. The CR-type zinc-finger motif lies at G136–T218. C149, C152, C166, C169, C192, C195, C206, and C209 together coordinate Zn(2+). CXXCXGXG motif repeat units lie at residues C149–G156, C166–G173, C192–G199, and C206–G213.

This sequence belongs to the DnaJ family. Homodimer. Requires Zn(2+) as cofactor.

It localises to the cytoplasm. In terms of biological role, participates actively in the response to hyperosmotic and heat shock by preventing the aggregation of stress-denatured proteins and by disaggregating proteins, also in an autonomous, DnaK-independent fashion. Unfolded proteins bind initially to DnaJ; upon interaction with the DnaJ-bound protein, DnaK hydrolyzes its bound ATP, resulting in the formation of a stable complex. GrpE releases ADP from DnaK; ATP binding to DnaK triggers the release of the substrate protein, thus completing the reaction cycle. Several rounds of ATP-dependent interactions between DnaJ, DnaK and GrpE are required for fully efficient folding. Also involved, together with DnaK and GrpE, in the DNA replication of plasmids through activation of initiation proteins. This is Chaperone protein DnaJ from Trichormus variabilis (strain ATCC 29413 / PCC 7937) (Anabaena variabilis).